Consider the following 512-residue polypeptide: MATFVDTVTLHLRAGNGGNGCVSVRREKFKPLAGPDGGNGGNGGDIVLVADPQVTTLLAYHRGPHRSSRNGGPGMGDHRHGTLGEALELHVPVGTVVKDADGNELADMATPGMRFIAAEAGQGGLGNASLATTKRKAPGFALLGTRGYEGDVVLELKVVADVALVGYPSAGKSSLVAAISAAKPKIADYPFTTLHPNLGVVEVADSRYTVADVPGLIEGASEGKGLGLEFLRHVERCSALLHVLDCATLDPGRDPISDLDIILTELAAYPVPDGQVPLLDRPQLIALNKIDVPEARELAELVRPELEARGYRVFDISTVSHDGLRQLSFALAELVEDARTKAAEEPEAPRIVLRPRAVNEKPFTIRVDGGSYGDIYRVIGTKPERWVQQTDFTNDEAVGYLADRLAKLGVEDGLFKAGAVAGSSVVIGEGDGIVFDWEPTLTSTAELITSPRGADARVDPISRRTNQARREDYFARMDAKAEARAQLVREGEAGLWADEDGTDEDASSDAKA.

In terms of domain architecture, Obg spans 2-159 (ATFVDTVTLH…GDVVLELKVV (158 aa)). One can recognise an OBG-type G domain in the interval 160-336 (ADVALVGYPS…LSFALAELVE (177 aa)). Residues 166 to 173 (GYPSAGKS), 191 to 195 (FTTLH), 212 to 215 (DVPG), 288 to 291 (NKID), and 317 to 319 (STV) each bind GTP. Serine 173 and threonine 193 together coordinate Mg(2+). The OCT domain occupies 355 to 439 (PRAVNEKPFT…GDGIVFDWEP (85 aa)). Residues 491–512 (GEAGLWADEDGTDEDASSDAKA) form a disordered region. A compositionally biased stretch (acidic residues) spans 497–512 (ADEDGTDEDASSDAKA).

It belongs to the TRAFAC class OBG-HflX-like GTPase superfamily. OBG GTPase family. As to quaternary structure, monomer. It depends on Mg(2+) as a cofactor.

The protein localises to the cytoplasm. Its function is as follows. An essential GTPase which binds GTP, GDP and possibly (p)ppGpp with moderate affinity, with high nucleotide exchange rates and a fairly low GTP hydrolysis rate. Plays a role in control of the cell cycle, stress response, ribosome biogenesis and in those bacteria that undergo differentiation, in morphogenesis control. The protein is GTPase Obg of Clavibacter michiganensis subsp. michiganensis (strain NCPPB 382).